The sequence spans 1036 residues: Potassium-transporting ATPase alpha chain 2 (1036 aa).

The interval 1 to 50 (MRRKTEIYSVELNGTKDVKPADQRDDKKFKGAKNKDLEPNKSHEKEELKK) is disordered. Topologically, residues 1–99 (MRRKTEIYSV…PNTLTPPKQT (99 aa)) are cytoplasmic. Residues 14–50 (GTKDVKPADQRDDKKFKGAKNKDLEPNKSHEKEELKK) show a composition bias toward basic and acidic residues. A helical membrane pass occupies residues 100–120 (PEIIKFLKQMVGGFSILLWIG). At 121–143 (AALCWIAFVIQYVNNSASLDNVY) the chain is on the lumenal side. A helical transmembrane segment spans residues 144 to 164 (LGAILVLVVILTGIFAYYQEA). The Cytoplasmic portion of the chain corresponds to 165–300 (KSTNIMASFS…SEKTPIAIEI (136 aa)). The helical transmembrane segment at 301–320 (EHFVHIVAGVAVSIDIIFFI) threads the bilayer. Residues 321 to 332 (TAVCMKYYVLDA) are Lumenal-facing. A helical membrane pass occupies residues 333–350 (IIFLISIIVANVPEGLLA). At 351-784 (TVTVTLSLTA…EEGRLIFDNL (434 aa)) the chain is on the cytoplasmic side. Residue Asp-388 is the 4-aspartylphosphate intermediate of the active site. 2 residues coordinate Mg(2+): Asp-729 and Asp-733. The chain crosses the membrane as a helical span at residues 785–804 (KKTIAYTLTKNIAELCPFLI). Residues 805-814 (YIVAGLPLPI) lie on the Lumenal side of the membrane. A helical membrane pass occupies residues 815 to 835 (GTITILFIDLGTDIIPSIALA). The Cytoplasmic segment spans residues 836–855 (YEKAESDIMNRKPRHKKKDR). A helical transmembrane segment spans residues 856 to 878 (LVNTQLAIYSYLHIGLMQALGGF). The Lumenal segment spans residues 879-930 (LVYFTVYAQQGFWPTSLINLRVAWETDDINDLEDSYGQEWTRYQRKYLEWTG). The chain crosses the membrane as a helical span at residues 931-950 (STAFFVAIMIQQIADLIIRK). Over 951 to 964 (TRRNSIFQQGLFRN) the chain is Cytoplasmic. The residue at position 955 (Ser-955) is a Phosphoserine; by PKA. Residues 965–983 (KVIWVGIASQVIVALILSY) form a helical membrane-spanning segment. Over 984 to 998 (GLGSVPALSFTMLRV) the chain is Lumenal. The chain crosses the membrane as a helical span at residues 999 to 1019 (QYWFVAVPHAILIWVYDEMRK). At 1020–1036 (LFIRLYPGSWWDKNMYY) the chain is on the cytoplasmic side.

It belongs to the cation transport ATPase (P-type) (TC 3.A.3) family. Type IIC subfamily. In terms of assembly, the ATPase pump is composed of a catalytic alpha subunit and an auxiliary non-catalytic beta subunit. The alpha subunit pairs with the beta subunit of gastric H(+)/K(+) ATPase ATP4B or the beta subunit of Na(+)/K(+) ATPases ATP1B1 and ATP1B3; this interaction is required for the formation of a functionally active pump and its targeting at the plasma membrane. In terms of tissue distribution, expressed at high levels in distal colon, coagulating and preputial glands; at much lower levels in proximal colon, kidney, uterus, brain, placenta and lung; and at trace levels in heart and forestomach. Expressed in distal colon epithelium (at protein level). Expressed in anterior prostate (at protein level).

The protein localises to the apical cell membrane. The enzyme catalyses K(+)(out) + ATP + H2O + H(+)(in) = K(+)(in) + ADP + phosphate + 2 H(+)(out). The catalysed reaction is K(+)(out) + Na(+)(in) + ATP + H2O = K(+)(in) + Na(+)(out) + ADP + phosphate + H(+). With respect to regulation, up-regulated by K(+) ions in a dose-dependent way. In terms of biological role, the catalytic subunit of a H(+)/K(+) ATPase and/or Na(+)/K(+) ATPase pump which transports K(+) ions in exchange for Na(+) and/or H(+) ions across the apical membrane of epithelial cells. Uses ATP as an energy source to pump K(+) ions into the cell while transporting Na(+) and/or H(+) ions to the extracellular compartment. Involved in the maintenance of electrolyte homeostasis through K(+) ion absorption in kidney and colon. In the airway epithelium, may play a primary role in mucus acidification regulating its viscosity and clearance. This Rattus norvegicus (Rat) protein is Potassium-transporting ATPase alpha chain 2 (Atp12a).